A 428-amino-acid chain; its full sequence is Glutamate-1-semialdehyde 2,1-aminomutase (428 aa).

Lys-267 bears the N6-(pyridoxal phosphate)lysine mark.

It belongs to the class-III pyridoxal-phosphate-dependent aminotransferase family. HemL subfamily. As to quaternary structure, homodimer. Requires pyridoxal 5'-phosphate as cofactor.

It is found in the cytoplasm. It catalyses the reaction (S)-4-amino-5-oxopentanoate = 5-aminolevulinate. Its pathway is porphyrin-containing compound metabolism; protoporphyrin-IX biosynthesis; 5-aminolevulinate from L-glutamyl-tRNA(Glu): step 2/2. It participates in porphyrin-containing compound metabolism; chlorophyll biosynthesis. In Prochlorococcus marinus (strain MIT 9313), this protein is Glutamate-1-semialdehyde 2,1-aminomutase.